The following is a 172-amino-acid chain: MDRHRDFGKDRLRDKEFTEKLIKLNRTAKVVKGGRRFSFSALTVVGDQKGRVGFGFGKAGDVSEAIRKSVERAKRSMVLFPLKDGTIPHEVQAKFKGSLVLLRPACSGTGIIAGGTVRAIMEVAGATDVLSKSLGSNSAINVVRATFGAVAQLMDARKLARERGKALVDMWG.

In terms of domain architecture, S5 DRBM spans Phe17–Phe80.

It belongs to the universal ribosomal protein uS5 family. Part of the 30S ribosomal subunit. Contacts proteins S4 and S8.

Its function is as follows. With S4 and S12 plays an important role in translational accuracy. Located at the back of the 30S subunit body where it stabilizes the conformation of the head with respect to the body. In Treponema pallidum (strain Nichols), this protein is Small ribosomal subunit protein uS5.